The chain runs to 638 residues: Zinc finger and BTB domain-containing protein 22 (638 aa).

Positions 57–121 (CDVSIRVQGR…AYTGRLSMAA (65 aa)) constitute a BTB domain. 4 disordered regions span residues 171–223 (CASV…STSQ), 229–248 (SAAG…APVV), 335–354 (DDED…GEPE), and 367–451 (EPAD…HGAV). Residues 189–210 (SVRSHTSSRASENQSPSSSNYF) show a composition bias toward polar residues. Phosphoserine is present on S203. Residues 483-504 (FLCHCGKAFSHKSMRDRHVNMH) form a C2H2-type 1; atypical zinc finger. C2H2-type zinc fingers lie at residues 510-532 (FDCP…MKTH) and 538-559 (YECS…HRGH). Residues 564–638 (HRMGVGGVGS…DFSGGGGAAH (75 aa)) form a disordered region.

The protein belongs to the krueppel C2H2-type zinc-finger protein family.

It localises to the nucleus. May be involved in transcriptional regulation. This is Zinc finger and BTB domain-containing protein 22 (Zbtb22) from Mus musculus (Mouse).